A 457-amino-acid chain; its full sequence is Argininosuccinate lyase (457 aa).

The protein belongs to the lyase 1 family. Argininosuccinate lyase subfamily.

It localises to the cytoplasm. It carries out the reaction 2-(N(omega)-L-arginino)succinate = fumarate + L-arginine. The protein operates within amino-acid biosynthesis; L-arginine biosynthesis; L-arginine from L-ornithine and carbamoyl phosphate: step 3/3. The chain is Argininosuccinate lyase from Escherichia coli O7:K1 (strain IAI39 / ExPEC).